Consider the following 357-residue polypeptide: Major outer membrane protein P.IB (357 aa).

The signal sequence occupies residues 1 to 19 (MKKSLIALTLAALPVAAMA).

Belongs to the Gram-negative porin family. Homotrimer.

The protein resides in the cell outer membrane. Functionally, serves as a slightly cation selective porin. The polypeptide is Major outer membrane protein P.IB (por) (Neisseria sicca).